A 106-amino-acid chain; its full sequence is Probable NADP-dependent dehydrogenase in aabA 3'region (106 aa).

4–28 contacts NADP(+); that stretch reads LITGASSGFGWEAAKLCVAKGHRVI.

The protein belongs to the short-chain dehydrogenases/reductases (SDR) family.

This chain is Probable NADP-dependent dehydrogenase in aabA 3'region, found in Dichelobacter nodosus (Bacteroides nodosus).